The following is a 193-amino-acid chain: MTDYLLLFVGTVLVNNFVLVKFLGLCPFMGVSKKLETAMGMGLATTFVMTLASICAWLIDTWILIPLNLIYLRTLAFILVIAVVVQFTEMVVRKTSPVLYRLLGIFLPLITTNCAVLGVALLNINLGHNFLQSALYGFSAAVGFSLVMVLFAAIRERLAVADVPAPFRGNAIALITAGLMSLAFMGFNGLVKL.

Helical transmembrane passes span 5–25 (LLLF…FLGL), 39–59 (MGMG…AWLI), 63–83 (ILIP…VIAV), 102–122 (LLGI…VALL), 134–154 (ALYG…FAAI), and 171–191 (AIAL…NGLV).

It belongs to the NqrDE/RnfAE family. In terms of assembly, the complex is composed of six subunits: RsxA, RsxB, RsxC, RsxD, RsxE and RsxG.

The protein localises to the cell inner membrane. In terms of biological role, part of a membrane-bound complex that couples electron transfer with translocation of ions across the membrane. Required to maintain the reduced state of SoxR. The sequence is that of Ion-translocating oxidoreductase complex subunit A from Shigella sonnei (strain Ss046).